A 418-amino-acid chain; its full sequence is Ankyrin repeat and SOCS box protein 6 (418 aa).

ANK repeat units follow at residues 65 to 95, 100 to 129, 134 to 164, 168 to 203, 224 to 253, and 258 to 287; these read EGVS…NLNF, TYYT…DINR, HESS…DVNA, NGKT…DVKA, CGDK…DPSE, and ESLT…AYNC. The SOCS box domain maps to 358-413; it reads ALHASLRQLESYPPPLKHLCRVSIRLCLRPWPVDTKVKALPLPDRLKWYLLSAHSD.

It belongs to the ankyrin SOCS box (ASB) family. In terms of assembly, binds APS. Identified in a complex with ELOB and ELOC. Interacts with CUL5 and RNF7. Interacts with SQSTM1. Detected in adipocytes.

The protein resides in the cytoplasm. It functions in the pathway protein modification; protein ubiquitination. Functionally, probable substrate-recognition component of a SCF-like ECS (Elongin-Cullin-SOCS-box protein) E3 ubiquitin-protein ligase complex which mediates the ubiquitination and subsequent proteasomal degradation of target proteins. May play a role in the regulation of cell proliferation and autophagy by promoting the ubiquitination and degradation of SQSTM1. The chain is Ankyrin repeat and SOCS box protein 6 (Asb6) from Mus musculus (Mouse).